The following is a 194-amino-acid chain: Peptidyl-tRNA hydrolase (194 aa).

Position 17 (Y17) interacts with tRNA. H22 acts as the Proton acceptor in catalysis. Residues Y68, N70, and N116 each contribute to the tRNA site.

This sequence belongs to the PTH family. Monomer.

It is found in the cytoplasm. It catalyses the reaction an N-acyl-L-alpha-aminoacyl-tRNA + H2O = an N-acyl-L-amino acid + a tRNA + H(+). Hydrolyzes ribosome-free peptidyl-tRNAs (with 1 or more amino acids incorporated), which drop off the ribosome during protein synthesis, or as a result of ribosome stalling. Functionally, catalyzes the release of premature peptidyl moieties from peptidyl-tRNA molecules trapped in stalled 50S ribosomal subunits, and thus maintains levels of free tRNAs and 50S ribosomes. The sequence is that of Peptidyl-tRNA hydrolase from Pseudoalteromonas translucida (strain TAC 125).